The following is a 261-amino-acid chain: Small ribosomal subunit protein eS4B (261 aa).

Position 32 is a phosphoserine (Ser-32). The region spanning 42 to 105 (LPLIVFLRNR…NENFRLVYDV (64 aa)) is the S4 RNA-binding domain. Lys-62 is covalently cross-linked (Glycyl lysine isopeptide (Lys-Gly) (interchain with G-Cter in ubiquitin)). Position 115 is a phosphothreonine (Thr-115). Glycyl lysine isopeptide (Lys-Gly) (interchain with G-Cter in ubiquitin) cross-links involve residues Lys-134, Lys-161, Lys-168, Lys-174, Lys-179, Lys-211, and Lys-233. Ser-247 is subject to Phosphoserine.

Belongs to the eukaryotic ribosomal protein eS4 family. Component of the small ribosomal subunit (SSU). Mature yeast ribosomes consist of a small (40S) and a large (60S) subunit. The 40S small subunit contains 1 molecule of ribosomal RNA (18S rRNA) and 33 different proteins (encoded by 57 genes). The large 60S subunit contains 3 rRNA molecules (25S, 5.8S and 5S rRNA) and 46 different proteins (encoded by 81 genes).

The protein resides in the cytoplasm. In terms of biological role, component of the ribosome, a large ribonucleoprotein complex responsible for the synthesis of proteins in the cell. The small ribosomal subunit (SSU) binds messenger RNAs (mRNAs) and translates the encoded message by selecting cognate aminoacyl-transfer RNA (tRNA) molecules. The large subunit (LSU) contains the ribosomal catalytic site termed the peptidyl transferase center (PTC), which catalyzes the formation of peptide bonds, thereby polymerizing the amino acids delivered by tRNAs into a polypeptide chain. The nascent polypeptides leave the ribosome through a tunnel in the LSU and interact with protein factors that function in enzymatic processing, targeting, and the membrane insertion of nascent chains at the exit of the ribosomal tunnel. The polypeptide is Small ribosomal subunit protein eS4B (Saccharomyces cerevisiae (strain ATCC 204508 / S288c) (Baker's yeast)).